Reading from the N-terminus, the 194-residue chain is ATP-dependent Clp protease proteolytic subunit 1 (194 aa).

Serine 99 acts as the Nucleophile in catalysis. Residue histidine 124 is part of the active site.

It belongs to the peptidase S14 family. Fourteen ClpP subunits assemble into 2 heptameric rings which stack back to back to give a disk-like structure with a central cavity, resembling the structure of eukaryotic proteasomes.

It is found in the cytoplasm. It carries out the reaction Hydrolysis of proteins to small peptides in the presence of ATP and magnesium. alpha-casein is the usual test substrate. In the absence of ATP, only oligopeptides shorter than five residues are hydrolyzed (such as succinyl-Leu-Tyr-|-NHMec, and Leu-Tyr-Leu-|-Tyr-Trp, in which cleavage of the -Tyr-|-Leu- and -Tyr-|-Trp bonds also occurs).. Functionally, cleaves peptides in various proteins in a process that requires ATP hydrolysis. Has a chymotrypsin-like activity. Plays a major role in the degradation of misfolded proteins. This chain is ATP-dependent Clp protease proteolytic subunit 1, found in Borreliella burgdorferi (strain ATCC 35210 / DSM 4680 / CIP 102532 / B31) (Borrelia burgdorferi).